The chain runs to 419 residues: MTTQLEQAWELAKQRFAAVGIDVEEALRQLDRLPVSMHCWQGDDVSGFENPEGSLTGGIQATGNYPGKARNASELRADLEQAMRLIPGPKRLNLHAIYLESDTPVSRDQITPEHFKNWVEWAKANQLGLDFNPSCFSHPLSADGFTLSHADDRIRQFWIDHCKASRRVSAYFGEQLGTPSVMNIWIPDGMKDITVDRLAPRQRLLAALDEVISEKLNPAHHIDAVESKLFGIGAESYTVGSNEFYLGYATSRQTALCLDAGHFHPTEVISDKISAAMLYVPQLLLHVSRPVRWDSDHVVLLDDETQAIASEIVRHDLFDRVHIGLDFFDASINRIAAWVIGTRNMKKALLRALLEPTAELRKLESAGDYTARLALLEEQKSLPWQAVWEMYCQRHDTPAGSEWLENVRTYEKEILSRRG.

Mn(2+) contacts are provided by His-262, Asp-294, and Asp-296.

It belongs to the rhamnose isomerase family. Homotetramer. It depends on Mn(2+) as a cofactor.

It is found in the cytoplasm. It catalyses the reaction L-rhamnopyranose = L-rhamnulose. It participates in carbohydrate degradation; L-rhamnose degradation; glycerone phosphate from L-rhamnose: step 1/3. Catalyzes the interconversion of L-rhamnose and L-rhamnulose. The polypeptide is L-rhamnose isomerase (Escherichia coli O127:H6 (strain E2348/69 / EPEC)).